A 40-amino-acid polypeptide reads, in one-letter code: Photosystem II reaction center protein X (40 aa).

Over 1–11 (TITPSLKGFFI) the chain is Lumenal. The chain crosses the membrane as a helical span at residues 12 to 28 (GLLSGAVVLGLTFAVLI). At 29–40 (AISQIDKVQRSL) the chain is on the cytoplasmic side.

This sequence belongs to the PsbX family. Type 1 subfamily. As to quaternary structure, PSII is composed of 1 copy each of membrane proteins PsbA, PsbB, PsbC, PsbD, PsbE, PsbF, PsbH, PsbI, PsbJ, PsbK, PsbL, PsbM, PsbT, PsbX, PsbY, PsbZ, Psb30/Ycf12, peripheral proteins PsbO, CyanoQ (PsbQ), PsbU, PsbV and a large number of cofactors. It forms dimeric complexes. The cofactor is PSII binds multiple chlorophylls, carotenoids and specific lipids..

It localises to the cellular thylakoid membrane. Involved in the binding and/or turnover of quinones at the Q(B) site of photosystem II (PSII). PSII is a light-driven water plastoquinone oxidoreductase, using light energy to abstract electrons from H(2)O, generating a proton gradient subsequently used for ATP formation. This is Photosystem II reaction center protein X from Thermostichus vulcanus (Synechococcus vulcanus).